Consider the following 304-residue polypeptide: Glycine--tRNA ligase alpha subunit (304 aa).

It belongs to the class-II aminoacyl-tRNA synthetase family. As to quaternary structure, tetramer of two alpha and two beta subunits.

The protein resides in the cytoplasm. It catalyses the reaction tRNA(Gly) + glycine + ATP = glycyl-tRNA(Gly) + AMP + diphosphate. The protein is Glycine--tRNA ligase alpha subunit of Afipia carboxidovorans (strain ATCC 49405 / DSM 1227 / KCTC 32145 / OM5) (Oligotropha carboxidovorans).